A 101-amino-acid polypeptide reads, in one-letter code: Co-chaperonin GroES (101 aa).

Belongs to the GroES chaperonin family. As to quaternary structure, heptamer of 7 subunits arranged in a ring. Interacts with the chaperonin GroEL.

It is found in the cytoplasm. In terms of biological role, together with the chaperonin GroEL, plays an essential role in assisting protein folding. The GroEL-GroES system forms a nano-cage that allows encapsulation of the non-native substrate proteins and provides a physical environment optimized to promote and accelerate protein folding. GroES binds to the apical surface of the GroEL ring, thereby capping the opening of the GroEL channel. The protein is Co-chaperonin GroES of Lawsonia intracellularis.